Consider the following 322-residue polypeptide: MMESGEALLKKLDGRLSGLRGRLTPDTGMDKITWFRAGGPAQVLFQPSDEEDLSAFLKAVPEEIPLLVVGIGSNLLVRDGGVPGFVVRLSAKGFGEVEQVCDTQLRAGAAAPDKRVAAAALEAGLADFHFYHGIPGGIGGALRMNAGANGVETRERVVEVRALDRKGEVHVLSNADMGYAYRHSSASPDLIFTSVLFEGVPGERDDIRRAMDEVQHHRETVQPVREKTGGSTFKNPEGTSAWKEIDKAGCRGLRVGGAQMSEMHCNFMINTGNATGHDLETLGETVRARVFENSGIRLHWEIKRLGLFREGEQIEEFLGKII.

Residues Arg-36–Gly-202 form the FAD-binding PCMH-type domain. The active site involves Arg-182. The Proton donor role is filled by Ser-231. The active site involves Glu-301.

The protein belongs to the MurB family. The cofactor is FAD.

It is found in the cytoplasm. The enzyme catalyses UDP-N-acetyl-alpha-D-muramate + NADP(+) = UDP-N-acetyl-3-O-(1-carboxyvinyl)-alpha-D-glucosamine + NADPH + H(+). It functions in the pathway cell wall biogenesis; peptidoglycan biosynthesis. Its function is as follows. Cell wall formation. The sequence is that of UDP-N-acetylenolpyruvoylglucosamine reductase from Brucella canis (strain ATCC 23365 / NCTC 10854 / RM-666).